Consider the following 1207-residue polypeptide: DNA-directed RNA polymerase subunit beta' (1207 aa).

Zn(2+) is bound by residues cysteine 60, cysteine 62, cysteine 75, and cysteine 78. Residues aspartate 449, aspartate 451, and aspartate 453 each coordinate Mg(2+). Positions 822, 896, 903, and 906 each coordinate Zn(2+).

Belongs to the RNA polymerase beta' chain family. In terms of assembly, the RNAP catalytic core consists of 2 alpha, 1 beta, 1 beta' and 1 omega subunit. When a sigma factor is associated with the core the holoenzyme is formed, which can initiate transcription. Mg(2+) is required as a cofactor. It depends on Zn(2+) as a cofactor.

It carries out the reaction RNA(n) + a ribonucleoside 5'-triphosphate = RNA(n+1) + diphosphate. Its function is as follows. DNA-dependent RNA polymerase catalyzes the transcription of DNA into RNA using the four ribonucleoside triphosphates as substrates. The protein is DNA-directed RNA polymerase subunit beta' of Staphylococcus aureus (strain MRSA252).